The primary structure comprises 189 residues: Elongation factor P (189 aa).

It belongs to the elongation factor P family.

It is found in the cytoplasm. Its pathway is protein biosynthesis; polypeptide chain elongation. Functionally, involved in peptide bond synthesis. Stimulates efficient translation and peptide-bond synthesis on native or reconstituted 70S ribosomes in vitro. Probably functions indirectly by altering the affinity of the ribosome for aminoacyl-tRNA, thus increasing their reactivity as acceptors for peptidyl transferase. In Phytoplasma australiense, this protein is Elongation factor P.